Reading from the N-terminus, the 177-residue chain is 2''-aminoglycoside nucleotidyltransferase (177 aa).

The segment at 1 to 92 (MDTTQVTLIH…ELLDCEPAWW (92 aa)) is N-terminal domain. Residues Asp-44, Asp-46, and Asp-86 each contribute to the Mg(2+) site. The Proton acceptor role is filled by Asp-86. The segment at 93–177 (ADEAYEIAEA…RAAFRSRYAA (85 aa)) is C-terminal domain. Residue Ala-100 participates in kanamycin A binding.

Monomer. Requires Mg(2+) as cofactor.

The enzyme catalyses nucleoside triphosphate + gentamicin = diphosphate + 2''-nucleotidylgentamicin.. Its function is as follows. Mediates bacterial resistance to kanamycin, gentamicin, dibekacin, sisomicin and tobramycin by adenylating the 2''-hydroxyl group of these antibiotics. The protein is 2''-aminoglycoside nucleotidyltransferase of Klebsiella pneumoniae.